Consider the following 115-residue polypeptide: Large ribosomal subunit protein bL19 (115 aa).

It belongs to the bacterial ribosomal protein bL19 family.

Its function is as follows. This protein is located at the 30S-50S ribosomal subunit interface and may play a role in the structure and function of the aminoacyl-tRNA binding site. This is Large ribosomal subunit protein bL19 from Salmonella choleraesuis (strain SC-B67).